A 66-amino-acid polypeptide reads, in one-letter code: Large ribosomal subunit protein uL29 (66 aa).

This sequence belongs to the universal ribosomal protein uL29 family.

In Thermosipho africanus (strain TCF52B), this protein is Large ribosomal subunit protein uL29.